A 426-amino-acid polypeptide reads, in one-letter code: Transcriptional enhancer factor TEF-1 (426 aa).

Met1 is modified (N-acetylmethionine). Over residues 1–12 (MEPSSWSGSESP) the composition is skewed to polar residues. The tract at residues 1-31 (MEPSSWSGSESPAENMERMSDSADKPIDNDA) is disordered. Ser11 bears the Phosphoserine mark. The span at 15 to 28 (NMERMSDSADKPID) shows a compositional bias: basic and acidic residues. The segment at residues 28–104 (DNDAEGVWSP…QVLARRKSRD (77 aa)) is a DNA-binding region (TEA). An N6-lactoyllysine modification is found at Lys108. The transcriptional activation stretch occupies residues 167–426 (GSSQDVKPFV…QHHIYRLVKD (260 aa)).

Interacts with YAP1 and WWTR1/TAZ. Lactylation by AARS1 promotes nuclear localization and stabilization of YAP1, leading to increased Hippo signaling pathway. Delactylated by SIRT1. In developing skeletal muscle and myocardium, in mitotic neuroblasts both in the brain and spinal cord. At later stages of embryogenesis expressed in several developing structures such as the olfactory system, the intestine, and the kidney.

It is found in the nucleus. Its function is as follows. Transcription factor which plays a key role in the Hippo signaling pathway, a pathway involved in organ size control and tumor suppression by restricting proliferation and promoting apoptosis. The core of this pathway is composed of a kinase cascade wherein MST1/MST2, in complex with its regulatory protein SAV1, phosphorylates and activates LATS1/2 in complex with its regulatory protein MOB1, which in turn phosphorylates and inactivates YAP1 oncoprotein and WWTR1/TAZ. Acts by mediating gene expression of YAP1 and WWTR1/TAZ, thereby regulating cell proliferation, migration and epithelial mesenchymal transition (EMT) induction. Binds specifically and cooperatively to the SPH and GT-IIC 'enhansons' (5'-GTGGAATGT-3') and activates transcription in vivo in a cell-specific manner. The activation function appears to be mediated by a limiting cell-specific transcriptional intermediary factor (TIF). Involved in cardiac development. Binds to the M-CAT motif. In Mus musculus (Mouse), this protein is Transcriptional enhancer factor TEF-1 (Tead1).